A 345-amino-acid polypeptide reads, in one-letter code: Anthranilate phosphoribosyltransferase (345 aa).

5-phospho-alpha-D-ribose 1-diphosphate contacts are provided by residues Gly-84, 87–88, Thr-92, 94–97, 112–120, and Ser-124; these read GD, NIST, and KHGGRSVSS. Anthranilate is bound at residue Gly-84. Residue Ser-96 coordinates Mg(2+). Arg-170 is a binding site for anthranilate. Mg(2+) contacts are provided by Asp-229 and Glu-230.

Belongs to the anthranilate phosphoribosyltransferase family. As to quaternary structure, homodimer. Mg(2+) is required as a cofactor.

The enzyme catalyses N-(5-phospho-beta-D-ribosyl)anthranilate + diphosphate = 5-phospho-alpha-D-ribose 1-diphosphate + anthranilate. Its pathway is amino-acid biosynthesis; L-tryptophan biosynthesis; L-tryptophan from chorismate: step 2/5. Its function is as follows. Catalyzes the transfer of the phosphoribosyl group of 5-phosphorylribose-1-pyrophosphate (PRPP) to anthranilate to yield N-(5'-phosphoribosyl)-anthranilate (PRA). This Leptothrix cholodnii (strain ATCC 51168 / LMG 8142 / SP-6) (Leptothrix discophora (strain SP-6)) protein is Anthranilate phosphoribosyltransferase.